The following is an 871-amino-acid chain: Translation initiation factor IF-2 (871 aa).

2 disordered regions span residues 60 to 101 (KKNI…QEVK) and 184 to 203 (ESLKKKKKEKKSFVASKKES). Residues 61–72 (KNIKTPTAKKPK) show a composition bias toward basic residues. Over residues 73-101 (KENIKEQEKLNESEKKEPKKEEKLKQEVK) the composition is skewed to basic and acidic residues. One can recognise a tr-type G domain in the interval 370 to 537 (TRAPVITIMG…IVLLQADILE (168 aa)). The G1 stretch occupies residues 379–386 (GHVDHGKT). A GTP-binding site is contributed by 379 to 386 (GHVDHGKT). Residues 404 to 408 (GITQH) form a G2 region. Residues 425–428 (DTPG) form a G3 region. Residues 425–429 (DTPGH) and 479–482 (NKMD) each bind GTP. The G4 stretch occupies residues 479 to 482 (NKMD). The tract at residues 515–517 (SAK) is G5.

Belongs to the TRAFAC class translation factor GTPase superfamily. Classic translation factor GTPase family. IF-2 subfamily.

The protein localises to the cytoplasm. Functionally, one of the essential components for the initiation of protein synthesis. Protects formylmethionyl-tRNA from spontaneous hydrolysis and promotes its binding to the 30S ribosomal subunits. Also involved in the hydrolysis of GTP during the formation of the 70S ribosomal complex. The sequence is that of Translation initiation factor IF-2 from Campylobacter jejuni (strain RM1221).